The primary structure comprises 355 residues: Dual-specificity RNA methyltransferase RlmN (355 aa).

Catalysis depends on E86, which acts as the Proton acceptor. A Radical SAM core domain is found at 105–338 (KEARYTVCVS…CTIRESKGLD (234 aa)). An intrachain disulfide couples C112 to C343. Residues C119, C123, and C126 each contribute to the [4Fe-4S] cluster site. Residues 169–170 (GE), S201, 224–226 (SLH), and N300 contribute to the S-adenosyl-L-methionine site. Residue C343 is the S-methylcysteine intermediate of the active site.

It belongs to the radical SAM superfamily. RlmN family. Requires [4Fe-4S] cluster as cofactor.

It localises to the cytoplasm. The enzyme catalyses adenosine(2503) in 23S rRNA + 2 reduced [2Fe-2S]-[ferredoxin] + 2 S-adenosyl-L-methionine = 2-methyladenosine(2503) in 23S rRNA + 5'-deoxyadenosine + L-methionine + 2 oxidized [2Fe-2S]-[ferredoxin] + S-adenosyl-L-homocysteine. It carries out the reaction adenosine(37) in tRNA + 2 reduced [2Fe-2S]-[ferredoxin] + 2 S-adenosyl-L-methionine = 2-methyladenosine(37) in tRNA + 5'-deoxyadenosine + L-methionine + 2 oxidized [2Fe-2S]-[ferredoxin] + S-adenosyl-L-homocysteine. Functionally, specifically methylates position 2 of adenine 2503 in 23S rRNA and position 2 of adenine 37 in tRNAs. m2A2503 modification seems to play a crucial role in the proofreading step occurring at the peptidyl transferase center and thus would serve to optimize ribosomal fidelity. This chain is Dual-specificity RNA methyltransferase RlmN, found in Nitratiruptor sp. (strain SB155-2).